The sequence spans 838 residues: Transforming acidic coiled-coil-containing protein 3 (838 aa).

N-acetylserine is present on S2. Residues S25, S39, and S71 each carry the phosphoserine modification. Positions 123 to 227 (EADTDLLGDA…HGAEEECKAE (105 aa)) are disordered. A compositionally biased stretch (low complexity) spans 132–164 (ASPAFGSGSSSESGPGALADLDCSSSSQSPGSS). Residues S175 and S177 each carry the phosphoserine modification. Basic and acidic residues predominate over residues 204–227 (DPCRTESQHKAETPHGAEEECKAE). Residues S250, S317, and S402 each carry the phosphoserine modification. The disordered stretch occupies residues 311–527 (GRAMTLSPQE…LELKEESFRD (217 aa)). The segment covering 403–412 (YHLDWDKMDD) has biased composition (basic and acidic residues). S434 carries the phosphoserine modification. Residues 492 to 503 (NSASTSLPTSCP) are compositionally biased toward polar residues. The tract at residues 522 to 577 (EESFRDPAEVLGTGAEVDYLEQFGTSSFKESALRKQSLYLKFDPLLRDSPGRPVPV) is necessary but not sufficient for spindle localization. The residue at position 558 (S558) is a Phosphoserine; by AURKA. Residues 569–594 (DSPGRPVPVATETSSMHGANETPSGR) are disordered. The segment covering 579 to 591 (TETSSMHGANETP) has biased composition (polar residues). A necessary but not sufficient for spindle localization region spans residues 594-838 (RPREAKLVEF…DDLISKMEKI (245 aa)). Residues 637-837 (LQYSQKDLDA…CDDLISKMEK (201 aa)) adopt a coiled-coil conformation.

This sequence belongs to the TACC family. As to quaternary structure, interacts with microtubules. Interacts with CKAP5 independently of clathrin. Interacts with CKAP5 and clathrin forming the TACC3/ch-TOG/clathrin complex located at spindle inter-microtubules bridges; TACC3 (phosphorylated at Ser-558 by AURKA) and CLTC are proposed to form a composite microtubule interaction surface. Interacts with CCDC100/CEP120. The coiled coil C-terminal region interacts with AH receptor nuclear translocator protein (ARNT) and ARNT2. Interacts with GCN5L2 and PCAF.

Its subcellular location is the cytoplasm. The protein localises to the cytoskeleton. It is found in the microtubule organizing center. The protein resides in the centrosome. It localises to the spindle. Its subcellular location is the spindle pole. Plays a role in the microtubule-dependent coupling of the nucleus and the centrosome. Involved in the processes that regulate centrosome-mediated interkinetic nuclear migration (INM) of neural progenitors. Acts as a component of the TACC3/ch-TOG/clathrin complex proposed to contribute to stabilization of kinetochore fibers of the mitotic spindle by acting as inter-microtubule bridge. The TACC3/ch-TOG/clathrin complex is required for the maintenance of kinetochore fiber tension. May be involved in the control of cell growth and differentiation. May contribute to cancer. The sequence is that of Transforming acidic coiled-coil-containing protein 3 (TACC3) from Homo sapiens (Human).